The sequence spans 178 residues: ATP-dependent protease subunit HslV (178 aa).

T7 is a catalytic residue. G162, C165, and T168 together coordinate Na(+).

It belongs to the peptidase T1B family. HslV subfamily. As to quaternary structure, a double ring-shaped homohexamer of HslV is capped on each side by a ring-shaped HslU homohexamer. The assembly of the HslU/HslV complex is dependent on binding of ATP.

The protein localises to the cytoplasm. The enzyme catalyses ATP-dependent cleavage of peptide bonds with broad specificity.. Allosterically activated by HslU binding. Its function is as follows. Protease subunit of a proteasome-like degradation complex believed to be a general protein degrading machinery. This is ATP-dependent protease subunit HslV from Burkholderia vietnamiensis (strain G4 / LMG 22486) (Burkholderia cepacia (strain R1808)).